A 401-amino-acid chain; its full sequence is NADH-ubiquinone oxidoreductase 49 kDa subunit (401 aa).

This sequence belongs to the complex I 49 kDa subunit family.

It is found in the mitochondrion. The catalysed reaction is a ubiquinone + NADH + 5 H(+)(in) = a ubiquinol + NAD(+) + 4 H(+)(out). Core subunit of the mitochondrial membrane respiratory chain NADH dehydrogenase (Complex I) that is believed to belong to the minimal assembly required for catalysis. Complex I functions in the transfer of electrons from NADH to the respiratory chain. The immediate electron acceptor for the enzyme is believed to be ubiquinone. Component of the iron-sulfur (IP) fragment of the enzyme. The chain is NADH-ubiquinone oxidoreductase 49 kDa subunit (NAD7) from Acanthamoeba castellanii (Amoeba).